A 348-amino-acid chain; its full sequence is Uroporphyrinogen decarboxylase (348 aa).

Residues 27-31 (RQAGR), Phe46, Asp76, Tyr152, Ser207, and His320 each bind substrate.

This sequence belongs to the uroporphyrinogen decarboxylase family. In terms of assembly, homodimer.

The protein resides in the cytoplasm. The enzyme catalyses uroporphyrinogen III + 4 H(+) = coproporphyrinogen III + 4 CO2. It functions in the pathway porphyrin-containing compound metabolism; protoporphyrin-IX biosynthesis; coproporphyrinogen-III from 5-aminolevulinate: step 4/4. Functionally, catalyzes the decarboxylation of four acetate groups of uroporphyrinogen-III to yield coproporphyrinogen-III. This Bacillus anthracis protein is Uroporphyrinogen decarboxylase.